Consider the following 228-residue polypeptide: Ribonuclease 3 (228 aa).

Residues 8–130 (LKRLERRVDY…IIGAAFLDSD (123 aa)) form the RNase III domain. Mg(2+) is bound at residue glutamate 43. Aspartate 47 is an active-site residue. Mg(2+) is bound by residues aspartate 116 and glutamate 119. Residue glutamate 119 is part of the active site. Positions 157–226 (DPKTRLQEHL…ANKMLDSLSG (70 aa)) constitute a DRBM domain.

It belongs to the ribonuclease III family. In terms of assembly, homodimer. Mg(2+) serves as cofactor.

The protein localises to the cytoplasm. The catalysed reaction is Endonucleolytic cleavage to 5'-phosphomonoester.. Its function is as follows. Digests double-stranded RNA. Involved in the processing of primary rRNA transcript to yield the immediate precursors to the large and small rRNAs (23S and 16S). Processes some mRNAs, and tRNAs when they are encoded in the rRNA operon. Processes pre-crRNA and tracrRNA of type II CRISPR loci if present in the organism. This chain is Ribonuclease 3, found in Psychromonas ingrahamii (strain DSM 17664 / CCUG 51855 / 37).